The primary structure comprises 169 residues: Disulfide bond formation protein B 1 (169 aa).

Residues M1–F14 are Cytoplasmic-facing. Residues L15–Y31 form a helical membrane-spanning segment. Topologically, residues M32 to Y49 are periplasmic. A disulfide bond links C41 and C44. Residues A50–P65 form a helical membrane-spanning segment. Topologically, residues G66 to A72 are cytoplasmic. A helical membrane pass occupies residues F73–G89. At R90–Q144 the chain is on the periplasmic side. An intrachain disulfide couples C102 to C130. The chain crosses the membrane as a helical span at residues W145–R163. At N164 to Y169 the chain is on the cytoplasmic side.

Belongs to the DsbB family.

Its subcellular location is the cell inner membrane. In terms of biological role, required for disulfide bond formation in some periplasmic proteins. Acts by oxidizing the DsbA protein. In Pseudomonas syringae pv. syringae (strain B728a), this protein is Disulfide bond formation protein B 1.